Consider the following 344-residue polypeptide: MIVLGIESSCDETGVGVVKLDGEGNLEILADSVASSMQEHARFGGVVPEIASRAHLESMVPVMREALRQAGVDKPDAVAATVGPGLAGALLVGASAAKAYAAAWGVPFYAVNHLGGHVAVANLEGETLPHAVALLVSGGHTQLLEVDAVGLPMKELGSTLDDAAGEAYDKVSRLLGLGYPGGPIIDKLARRGNPEAIAFPRGLMKKSDSRHDFSFSGLKTSVARYVEAAERNGEVISVEDVCASFQEAVCDVLTFKAVRACRDVGAKVLLLGGGVAANSRLRELAQERCDKAGIELRVPRFNLCTDNGVMIAALAAQRIHEGAQESPISVGTDPSLSVETPQVF.

Fe cation-binding residues include H113 and H117. Residues 135–139, D169, G182, D186, and N278 each bind substrate; that span reads LVSGG. Position 306 (D306) interacts with Fe cation. The tract at residues 325 to 344 is disordered; that stretch reads ESPISVGTDPSLSVETPQVF. Polar residues predominate over residues 326–344; that stretch reads SPISVGTDPSLSVETPQVF.

It belongs to the KAE1 / TsaD family. Fe(2+) serves as cofactor.

It is found in the cytoplasm. It carries out the reaction L-threonylcarbamoyladenylate + adenosine(37) in tRNA = N(6)-L-threonylcarbamoyladenosine(37) in tRNA + AMP + H(+). Required for the formation of a threonylcarbamoyl group on adenosine at position 37 (t(6)A37) in tRNAs that read codons beginning with adenine. Is involved in the transfer of the threonylcarbamoyl moiety of threonylcarbamoyl-AMP (TC-AMP) to the N6 group of A37, together with TsaE and TsaB. TsaD likely plays a direct catalytic role in this reaction. This chain is tRNA N6-adenosine threonylcarbamoyltransferase, found in Corynebacterium glutamicum (strain R).